We begin with the raw amino-acid sequence, 577 residues long: 2-succinyl-5-enolpyruvyl-6-hydroxy-3-cyclohexene-1-carboxylate synthase (577 aa).

It belongs to the TPP enzyme family. MenD subfamily. In terms of assembly, homodimer. Requires Mg(2+) as cofactor. It depends on Mn(2+) as a cofactor. Thiamine diphosphate is required as a cofactor.

The enzyme catalyses isochorismate + 2-oxoglutarate + H(+) = 5-enolpyruvoyl-6-hydroxy-2-succinyl-cyclohex-3-ene-1-carboxylate + CO2. It functions in the pathway quinol/quinone metabolism; 1,4-dihydroxy-2-naphthoate biosynthesis; 1,4-dihydroxy-2-naphthoate from chorismate: step 2/7. The protein operates within quinol/quinone metabolism; menaquinone biosynthesis. Catalyzes the thiamine diphosphate-dependent decarboxylation of 2-oxoglutarate and the subsequent addition of the resulting succinic semialdehyde-thiamine pyrophosphate anion to isochorismate to yield 2-succinyl-5-enolpyruvyl-6-hydroxy-3-cyclohexene-1-carboxylate (SEPHCHC). This Christiangramia forsetii (strain DSM 17595 / CGMCC 1.15422 / KT0803) (Gramella forsetii) protein is 2-succinyl-5-enolpyruvyl-6-hydroxy-3-cyclohexene-1-carboxylate synthase.